The chain runs to 430 residues: MFDSLDLVIDTIVAREVLDSRGNPTVEAEVLLEGGASGRAIVPSGASTGAHEAHELRDGGDRYMGKGVIQAVNHIEERIAPALCGLSALDQAAVDAAMLELDGSDNKSSLGANAILAVSMANARAAANGLGLPLYRYLGGPMATLLPVPLMNVINGGAHAANSLDFQEFMLVPHGAPSFREALRMGTEVFHTLKKLLSAKGMSTAVGDEGGFAPDLGNVEAGEILVEAIEKAGYKPGEQISLALDVASTEFFADGRYAFDGGSYDSAEMVGQLEKLVEQFPIVSIEDGLAEDDWEGWKLLTERLGSKVQLVGDDLFVTNTKRLQQGIDSSTANSILIKVNQIGSLTETLQAIDLAGRSGYTSVISHRSGETEDTTIADLSVATRAGQIKTGSLSRSERVAKYNQLLRIEDELGSQAVYAGAVGQGPRGNA.

Gln167 is a binding site for (2R)-2-phosphoglycerate. Catalysis depends on Glu209, which acts as the Proton donor. Mg(2+) contacts are provided by Asp245, Glu286, and Asp313. (2R)-2-phosphoglycerate contacts are provided by Lys338, Arg367, Ser368, and Lys389. Lys338 serves as the catalytic Proton acceptor.

This sequence belongs to the enolase family. Mg(2+) serves as cofactor.

It is found in the cytoplasm. Its subcellular location is the secreted. The protein resides in the cell surface. The enzyme catalyses (2R)-2-phosphoglycerate = phosphoenolpyruvate + H2O. Its pathway is carbohydrate degradation; glycolysis; pyruvate from D-glyceraldehyde 3-phosphate: step 4/5. In terms of biological role, catalyzes the reversible conversion of 2-phosphoglycerate (2-PG) into phosphoenolpyruvate (PEP). It is essential for the degradation of carbohydrates via glycolysis. The protein is Enolase of Synechococcus sp. (strain WH7803).